Here is a 386-residue protein sequence, read N- to C-terminus: D(1)-like dopamine receptor (386 aa).

Residues 1 to 10 (MEIFTTTRGT) are compositionally biased toward polar residues. The segment at 1–28 (MEIFTTTRGTSAGPEPAPGGHGGTDSPR) is disordered. Over 1–35 (MEIFTTTRGTSAGPEPAPGGHGGTDSPRTSDLSLR) the chain is Extracellular. Residues 36–56 (ALTGCVLCILIVSTLLGNALV) traverse the membrane as a helical segment. At 57–72 (CAAVIKFRHLRSKVTN) the chain is on the cytoplasmic side. A helical membrane pass occupies residues 73–92 (AFVISLAVSDLFVAVLVMPW). The Extracellular segment spans residues 93-109 (RAVSEVAGVWLFGAFCD). A disulfide bridge connects residues C108 and C188. The helical transmembrane segment at 110–131 (TWVAFDIMCSTASILHLCIISM) threads the bilayer. The Cytoplasmic segment spans residues 132 to 150 (DRYWAISSPFRYERRMTPR). The helical transmembrane segment at 151–175 (FGCVMIGVAWTLSVLISFIPVQLNW) threads the bilayer. Residues 176–195 (HARGRERTDPGDCNASLNRT) lie on the Extracellular side of the membrane. N189 and N193 each carry an N-linked (GlcNAc...) asparagine glycan. Residues 196–220 (YAISSSLISFYIPVLIMVGTYTRIF) form a helical membrane-spanning segment. Over 221-266 (RIGRTQIRRISSLERAAPRATRGPALCDEESSLKTSFRRETKVLKT) the chain is Cytoplasmic. A helical membrane pass occupies residues 267–292 (LSVIMGVFVFCWLPFFVLNCMVPFCR). The Extracellular segment spans residues 293-305 (LEPAAAPCVSDTT). A helical membrane pass occupies residues 306 to 325 (FSVFVWFGWANSSLNPVIYA). Over 326–386 (FNADFRKAFS…SRGGPYQFAL (61 aa)) the chain is Cytoplasmic.

Belongs to the G-protein coupled receptor 1 family.

It localises to the cell membrane. It is found in the cell projection. Its subcellular location is the cilium membrane. In terms of biological role, this is one of the five types (D1 to D5) of receptors for dopamine. The activity of this receptor is mediated by G proteins which activate adenylyl cyclase. This chain is D(1)-like dopamine receptor, found in Oreochromis mossambicus (Mozambique tilapia).